A 613-amino-acid chain; its full sequence is Serine/threonine-protein kinase pkpA (613 aa).

The Protein kinase domain maps to 17-269 (SKLNTVLGKG…AQEILEHRFL (253 aa)). Residues 23–31 (LGKGAYKVV) and Lys-50 contribute to the ATP site. The Proton acceptor role is filled by Asp-140. 2 disordered regions span residues 424 to 475 (LQPQ…STML) and 589 to 613 (VTQRGLQGTRSGASTPVEEQEQELM). The span at 427–441 (QPQPQPQPQPQPQPQ) shows a compositional bias: pro residues. Residues 442–475 (PQFQLQPQLQYLSPQSTTSPGPTSDDNSTNSTML) show a composition bias toward low complexity. Residues 592 to 602 (RGLQGTRSGAS) are compositionally biased toward polar residues.

This sequence belongs to the protein kinase superfamily. Ser/Thr protein kinase family.

It catalyses the reaction L-seryl-[protein] + ATP = O-phospho-L-seryl-[protein] + ADP + H(+). The catalysed reaction is L-threonyl-[protein] + ATP = O-phospho-L-threonyl-[protein] + ADP + H(+). Functionally, serine/threonine protein kinase that probably participates as an intermediate in an intracellular system controlling nuclear proliferation. This is Serine/threonine-protein kinase pkpA (pkpA) from Phycomyces blakesleeanus (strain ATCC 8743b / DSM 1359 / FGSC 10004 / NBRC 33097 / NRRL 1555).